Here is a 93-residue protein sequence, read N- to C-terminus: Large ribosomal subunit protein uL23c (93 aa).

The protein belongs to the universal ribosomal protein uL23 family. In terms of assembly, part of the 50S ribosomal subunit.

It is found in the plastid. The protein localises to the chloroplast. Functionally, binds to 23S rRNA. This is Large ribosomal subunit protein uL23c (rpl23) from Adiantum capillus-veneris (Maidenhair fern).